A 97-amino-acid chain; its full sequence is Protein Vpr (97 aa).

Residues 1 to 42 (MEQAPENQGPAKEPFNEWALELLEELKAEAVRHFPRPWLHAL) form a homooligomerization region. Phosphoserine; by host is present on residues S79, S95, and S97.

It belongs to the HIV-1 VPR protein family. In terms of assembly, homooligomer, may form homodimer. Interacts with p6-gag region of the Pr55 Gag precursor protein through a (Leu-X-X)4 motif near the C-terminus of the P6gag protein. Interacts with host UNG. May interact with host RAD23A/HHR23A. Interacts with host VPRBP/DCAF1, leading to hijack the CUL4A-RBX1-DDB1-DCAF1/VPRBP complex, mediating ubiquitination of host proteins such as TERT and ZGPAT and arrest of the cell cycle in G2 phase. In terms of processing, phosphorylated on several residues by host. These phosphorylations regulate VPR activity for the nuclear import of the HIV-1 pre-integration complex.

It is found in the virion. The protein resides in the host nucleus. Its subcellular location is the host extracellular space. In terms of biological role, during virus replication, may deplete host UNG protein, and incude G2-M cell cycle arrest. Acts by targeting specific host proteins for degradation by the 26S proteasome, through association with the cellular CUL4A-DDB1 E3 ligase complex by direct interaction with host VPRPB/DCAF-1. Cell cycle arrest reportedly occurs within hours of infection and is not blocked by antiviral agents, suggesting that it is initiated by the VPR carried into the virion. Additionally, VPR induces apoptosis in a cell cycle dependent manner suggesting that these two effects are mechanistically linked. Detected in the serum and cerebrospinal fluid of AIDS patient, VPR may also induce cell death to bystander cells. During virus entry, plays a role in the transport of the viral pre-integration (PIC) complex to the host nucleus. This function is crucial for viral infection of non-dividing macrophages. May act directly at the nuclear pore complex, by binding nucleoporins phenylalanine-glycine (FG)-repeat regions. This chain is Protein Vpr, found in Human immunodeficiency virus type 1 group O (isolate ANT70) (HIV-1).